Reading from the N-terminus, the 249-residue chain is Caffeoyl-CoA O-methyltransferase (249 aa).

Substrate is bound at residue K21. S-adenosyl-L-methionine contacts are provided by residues T63, E85, G87–V88, S93, D111, and A140. D162 is a substrate binding site. D162 is an a divalent metal cation binding site. Residue D164 participates in S-adenosyl-L-methionine binding. Residues D188 and N189 each contribute to the a divalent metal cation site. N193 serves as a coordination point for substrate.

Belongs to the class I-like SAM-binding methyltransferase superfamily. Cation-dependent O-methyltransferase family. CCoAMT subfamily. As to quaternary structure, homodimer. A divalent metal cation is required as a cofactor.

The enzyme catalyses (E)-caffeoyl-CoA + S-adenosyl-L-methionine = (E)-feruloyl-CoA + S-adenosyl-L-homocysteine + H(+). The protein operates within aromatic compound metabolism; phenylpropanoid biosynthesis. In terms of biological role, methylates caffeoyl-CoA to feruloyl-CoA and 5-hydroxyferuloyl-CoA to sinapoyl-CoA. Plays a role in the synthesis of feruloylated polysaccharides. Involved in the reinforcement of the plant cell wall. Also involved in the responding to wounding or pathogen challenge by the increased formation of cell wall-bound ferulic acid polymers. This Eucalyptus gunnii (Cider gum) protein is Caffeoyl-CoA O-methyltransferase.